The sequence spans 156 residues: Ribosomal RNA large subunit methyltransferase H (156 aa).

Residues leucine 73, glycine 104, and 123–128 (IGPLTL) each bind S-adenosyl-L-methionine.

The protein belongs to the RNA methyltransferase RlmH family. In terms of assembly, homodimer.

The protein localises to the cytoplasm. It carries out the reaction pseudouridine(1915) in 23S rRNA + S-adenosyl-L-methionine = N(3)-methylpseudouridine(1915) in 23S rRNA + S-adenosyl-L-homocysteine + H(+). Its function is as follows. Specifically methylates the pseudouridine at position 1915 (m3Psi1915) in 23S rRNA. In Xanthomonas campestris pv. campestris (strain 8004), this protein is Ribosomal RNA large subunit methyltransferase H.